Here is a 202-residue protein sequence, read N- to C-terminus: MKALTTRQQEVYDLIRDHISSTGMPPTRAEIAMRLGFRSPNAAEEHLKALARKGVIEIISGASRGIRLLMEDEEGLPLIGRVAAGEPLLAQQHIEGHYKVDPSLFKPSADFLLRVNGMSMRDIGILDGDLLAVHKTQDVRNGQVVVARIEDEVTVKRLKKHGNVVELLPENSEFQPIVVDLRQQNFTIEGLAVGVIRNGDWV.

Residues 28–48 (RAEIAMRLGFRSPNAAEEHLK) constitute a DNA-binding region (H-T-H motif). Catalysis depends on for autocatalytic cleavage activity residues S119 and K156.

This sequence belongs to the peptidase S24 family. As to quaternary structure, homodimer.

The enzyme catalyses Hydrolysis of Ala-|-Gly bond in repressor LexA.. Represses a number of genes involved in the response to DNA damage (SOS response), including recA and lexA. Binds to the 16 bp palindromic sequence 5'-CTGTATATATATACAG-3'. In the presence of single-stranded DNA, RecA interacts with LexA causing an autocatalytic cleavage which disrupts the DNA-binding part of LexA, leading to derepression of the SOS regulon and eventually DNA repair. This chain is LexA repressor, found in Serratia proteamaculans (strain 568).